A 173-amino-acid polypeptide reads, in one-letter code: Membrane-bound hydrogenase subunit beta (173 aa).

It belongs to the complex I 30 kDa subunit family. The membrane-bound hydrogenase complex is composed of MbhK and MbhL, and may also contain MbhJ. The cofactor is Ni(2+).

It localises to the cell membrane. It catalyses the reaction H2 + 2 oxidized [2Fe-2S]-[ferredoxin] = 2 reduced [2Fe-2S]-[ferredoxin] + 2 H(+). With respect to regulation, inhibited by 0.1 mM Cu(2+). Functionally, beta subunit of a hydrogen-evolving hydrogenase that utilizes protons both as a substrate for hydrogen production and proton translocation. Acts by coupling the redox reaction via ferredoxin and iron-sulfur (Fe-S) clusters to proton translocation across the membrane thereby conserving the redox energy in a proton gradient. This is Membrane-bound hydrogenase subunit beta from Pyrococcus furiosus (strain ATCC 43587 / DSM 3638 / JCM 8422 / Vc1).